The primary structure comprises 141 residues: Hemoglobin subunit alpha-1/2 (141 aa).

In terms of domain architecture, Globin spans 1–141 (VLSPADKANV…VGTVLTSKYR (141 aa)). Ser3 is subject to Phosphoserine. 2 positions are modified to N6-succinyllysine: Lys7 and Lys11. Position 16 is an N6-acetyllysine; alternate (Lys16). Lys16 is subject to N6-succinyllysine; alternate. Phosphotyrosine is present on Tyr24. Phosphoserine is present on Ser35. N6-succinyllysine is present on Lys40. Ser49 is subject to Phosphoserine. His58 provides a ligand contact to O2. Position 87 (His87) interacts with heme b. A Phosphoserine modification is found at Ser102. Thr108 bears the Phosphothreonine mark. 2 positions are modified to phosphoserine: Ser124 and Ser131. Thr134 and Thr137 each carry phosphothreonine. A Phosphoserine modification is found at Ser138.

It belongs to the globin family. In terms of assembly, heterotetramer of two alpha chains and two beta chains. As to expression, red blood cells.

Functionally, involved in oxygen transport from the lung to the various peripheral tissues. The sequence is that of Hemoglobin subunit alpha-1/2 from Macroderma gigas (Australian ghost bat).